The primary structure comprises 107 residues: Essential MCU regulator, mitochondrial (107 aa).

A mitochondrion-targeting transit peptide spans 1–47 (MASGAARWLALVRVGSGASRSWLSLRKGGDVSAGRSCSGQSLVPTRS). Residues 48 to 65 (VIVTRSGAILPKPVKMSF) are Mitochondrial matrix-facing. The helical transmembrane segment at 66–85 (GLLRVFSIVIPFLYVGTLIS) threads the bilayer. The short motif at 81–85 (GTLIS) is the GXXXX[G/A/S] element. Over 86–107 (KNFAALLEEHDIFVPEDDDDDD) the chain is Mitochondrial intermembrane.

It belongs to the SMDT1/EMRE family. Component of the uniplex complex, composed of MCU, EMRE/SMDT1, MICU1 and MICU2 (or MICU3) in a 4:4:1:1 stoichiometry. The number of EMRE/SMDT1 molecules is hovewer variable, ranging from 1 to 4 copies per uniplex complex, leading to uniplex complexes with distinct gatekeeping profiles. Interacts (via its C-terminal poly-Asp tail) with MCUR1; the interaction is direct. Unprocessed form interacts (via transit peptide) with MAIP1. Undergoes proteolytic degradation in neurons: degraded by AFG3L2 and SPG7 before SMDT1/EMRE assembly with the uniporter complex, limiting the availability of SMDT1/EMRE for MCU assembly and promoting efficient assembly of gatekeeper subunits with MCU.

The protein resides in the mitochondrion inner membrane. In terms of biological role, essential regulatory subunit of the mitochondrial calcium uniporter complex (uniplex), a complex that mediates calcium uptake into mitochondria. Required to bridge the calcium-sensing proteins MICU1 with the calcium-conducting subunit MCU. Acts by mediating activation of MCU and retention of MICU1 to the MCU pore, in order to ensure tight regulation of the uniplex complex and appropriate responses to intracellular calcium signaling. This Bos taurus (Bovine) protein is Essential MCU regulator, mitochondrial.